The sequence spans 278 residues: Elongation factor Ts (278 aa).

An involved in Mg(2+) ion dislocation from EF-Tu region spans residues 79 to 82; that stretch reads TDFV.

Belongs to the EF-Ts family.

It localises to the cytoplasm. Associates with the EF-Tu.GDP complex and induces the exchange of GDP to GTP. It remains bound to the aminoacyl-tRNA.EF-Tu.GTP complex up to the GTP hydrolysis stage on the ribosome. The sequence is that of Elongation factor Ts from Borrelia duttonii (strain Ly).